A 397-amino-acid chain; its full sequence is Cysteine protease ATG4A (397 aa).

The Nucleophile role is filled by C79. Active-site residues include D279 and H281. Residues 392 to 395 (FEIL) carry the LIR motif.

The protein belongs to the peptidase C54 family.

It localises to the cytoplasm. The catalysed reaction is [protein]-C-terminal L-amino acid-glycyl-phosphatidylethanolamide + H2O = [protein]-C-terminal L-amino acid-glycine + a 1,2-diacyl-sn-glycero-3-phosphoethanolamine. Cysteine protease that plays a key role in autophagy by mediating both proteolytic activation and delipidation of ATG8 family proteins. The protease activity is required for proteolytic activation of ATG8 family proteins: cleaves the C-terminal amino acid of ATG8 proteins to reveal a C-terminal glycine. Exposure of the glycine at the C-terminus is essential for ATG8 proteins conjugation to phosphatidylethanolamine (PE) and insertion to membranes, which is necessary for autophagy. Protease activity is also required to counteract formation of high-molecular weight conjugates of ATG8 proteins (ATG8ylation): acts as a deubiquitinating-like enzyme that removes ATG8 conjugated to other proteins, such as ATG3. In addition to the protease activity, also mediates delipidation of ATG8 family proteins. Catalyzes delipidation of PE-conjugated forms of ATG8 proteins during macroautophagy. This chain is Cysteine protease ATG4A, found in Xenopus laevis (African clawed frog).